We begin with the raw amino-acid sequence, 493 residues long: (+)-menthofuran synthase (493 aa).

A topological domain (cytoplasmic) is located at residue M1. A helical; Signal-anchor for type II membrane protein membrane pass occupies residues 2–19; sequence AALLVFFSVSLILLAVLF. The Lumenal segment spans residues 20–493; that stretch reads HKRKSSLSSR…LLVLATPRQS (474 aa). Residue N169 is glycosylated (N-linked (GlcNAc...) asparagine). C434 is a binding site for heme.

This sequence belongs to the cytochrome P450 family. Requires heme as cofactor.

Its subcellular location is the membrane. The catalysed reaction is (R)-pulegone + reduced [NADPH--hemoprotein reductase] + O2 = (R)-menthofuran + oxidized [NADPH--hemoprotein reductase] + 2 H2O + H(+). It functions in the pathway secondary metabolite biosynthesis; terpenoid biosynthesis. Functionally, monoterpene synthase that catalyzes the formation of (+)-menthofuran from (+)-pulegone. The protein is (+)-menthofuran synthase of Mentha piperita (Peppermint).